An 82-amino-acid polypeptide reads, in one-letter code: Defensin-like protein 156 (82 aa).

The first 27 residues, 1–27 (MAKISCSYFLVLMLVFSVFSLVEKTKG), serve as a signal peptide directing secretion. Cystine bridges form between C31/C77, C41/C60, C46/C71, and C50/C73.

It belongs to the DEFL family. Expressed in flower buds, but not in stems, roots or rosette leaves.

Its subcellular location is the secreted. The protein is Defensin-like protein 156 (LCR21) of Arabidopsis thaliana (Mouse-ear cress).